The primary structure comprises 133 residues: uncharacterized protein (133 aa).

Residues 91 to 113 (LFATALISCIPSSFSALSFLATL) traverse the membrane as a helical segment.

The protein localises to the membrane. This is an uncharacterized protein from Saccharomyces cerevisiae (strain ATCC 204508 / S288c) (Baker's yeast).